The primary structure comprises 150 residues: Protein-export protein SecB (150 aa).

This sequence belongs to the SecB family. As to quaternary structure, homotetramer, a dimer of dimers. One homotetramer interacts with 1 SecA dimer.

Its subcellular location is the cytoplasm. In terms of biological role, one of the proteins required for the normal export of preproteins out of the cell cytoplasm. It is a molecular chaperone that binds to a subset of precursor proteins, maintaining them in a translocation-competent state. It also specifically binds to its receptor SecA. The sequence is that of Protein-export protein SecB from Chromobacterium violaceum (strain ATCC 12472 / DSM 30191 / JCM 1249 / CCUG 213 / NBRC 12614 / NCIMB 9131 / NCTC 9757 / MK).